We begin with the raw amino-acid sequence, 286 residues long: Deaminated glutathione amidase (286 aa).

A CN hydrolase domain is found at 4–252 (ANVALLQLCS…VSALKVKIET (249 aa)). Glutamate 42 serves as the catalytic Proton acceptor. Lysine 115 is a catalytic residue. Cysteine 157 functions as the Nucleophile in the catalytic mechanism.

This sequence belongs to the carbon-nitrogen hydrolase superfamily. NIT1/NIT2 family.

It carries out the reaction N-(4-oxoglutaryl)-L-cysteinylglycine + H2O = L-cysteinylglycine + 2-oxoglutarate. In terms of biological role, hydrolyzes deaminated glutathione (dGSH, 2-oxoglutaramate) to alpha-ketoglutarate (alpha-KG) and cysteinylglycine (specific activity 6.50 umol/min/mg), has less activity against alpha-ketoglutaramate (a-KGM, specific activity 0.20 umol/min/mg), very little activity on glutathione and none on L-glutamine. May function as a metabolite repair enzyme. This Yersinia enterocolitica protein is Deaminated glutathione amidase.